Consider the following 86-residue polypeptide: Probable weak neurotoxin NNAM1 (86 aa).

The first 21 residues, 1 to 21 (MKTLLLSLVVVTIVCLDLGYT), serve as a signal peptide directing secretion. 5 disulfides stabilise this stretch: cysteine 24/cysteine 45, cysteine 27/cysteine 32, cysteine 38/cysteine 63, cysteine 67/cysteine 78, and cysteine 79/cysteine 84.

It belongs to the three-finger toxin family. Ancestral subfamily. Orphan group II sub-subfamily. As to expression, expressed by the venom gland.

It is found in the secreted. Binds with low affinity to muscular (alpha-1-beta-1-delta-epsilon/CHRNA1-CHRNB1-CHRND-CHRNE) and very low affinity to neuronal (alpha-7/CHRNA7) nicotinic acetylcholine receptor (nAChR). This chain is Probable weak neurotoxin NNAM1, found in Naja atra (Chinese cobra).